A 632-amino-acid chain; its full sequence is Mitoguardin 1 (632 aa).

A helical membrane pass occupies residues 70 to 90 (PVAKKLFVVTAVSAISVIFLA). Phosphoserine occurs at positions 289 and 293.

Belongs to the mitoguardin family. As to quaternary structure, homodimer and heterodimer; forms heterodimers with MIGA2. Interacts with PLD6/MitoPLD.

The protein localises to the mitochondrion outer membrane. In terms of biological role, regulator of mitochondrial fusion: acts by forming homo- and heterodimers at the mitochondrial outer membrane and facilitating the formation of PLD6/MitoPLD dimers. May act by regulating phospholipid metabolism via PLD6/MitoPLD. This Homo sapiens (Human) protein is Mitoguardin 1.